The primary structure comprises 271 residues: Putative protein FAM220BP (271 aa).

The protein is Putative protein FAM220BP (FAM220BP) of Homo sapiens (Human).